The following is a 186-amino-acid chain: uncharacterized protein (186 aa).

The protein belongs to the geranylgeranyl reductase family. ChlP subfamily.

This is an uncharacterized protein from Methanosarcina barkeri.